Here is a 188-residue protein sequence, read N- to C-terminus: Accessory gene regulator protein B (188 aa).

The next 4 membrane-spanning stretches (helical) occupy residues 49–69 (VALLFHTFLYTLITHLTYFFV), 82–102 (LLCHIQNLVLFVALPWSIVHF), 104–124 (VSWTFMIFVAFIAFIIIICYA), and 163–183 (YMQLIALGMCIEAITLLPIFF).

The protein belongs to the AgrB family.

It localises to the cell membrane. Essential for the production of a quorum sensing system signal molecule, the autoinducing peptide (AIP). This quorum sensing system is responsible for the regulation of the expression of virulence factor genes. Involved in the proteolytic processing of AgrD, the precursor of AIP. The protein is Accessory gene regulator protein B of Staphylococcus lugdunensis.